We begin with the raw amino-acid sequence, 264 residues long: Pyridoxine 5'-phosphate synthase (264 aa).

Positions 1 to 21 are enriched in polar residues; the sequence is MTDTAQILPTTLEQNPQNTSK. Residues 1–22 are disordered; sequence MTDTAQILPTTLEQNPQNTSKK. Asn28 is a 3-amino-2-oxopropyl phosphate binding site. 30-31 is a 1-deoxy-D-xylulose 5-phosphate binding site; the sequence is DH. Residue Arg39 participates in 3-amino-2-oxopropyl phosphate binding. His64 serves as the catalytic Proton acceptor. Arg66 and His71 together coordinate 1-deoxy-D-xylulose 5-phosphate. Glu91 functions as the Proton acceptor in the catalytic mechanism. Residue Thr121 coordinates 1-deoxy-D-xylulose 5-phosphate. The Proton donor role is filled by His217. 3-amino-2-oxopropyl phosphate is bound by residues Gly218 and 239 to 240; that span reads GH.

It belongs to the PNP synthase family. As to quaternary structure, homooctamer; tetramer of dimers.

Its subcellular location is the cytoplasm. The catalysed reaction is 3-amino-2-oxopropyl phosphate + 1-deoxy-D-xylulose 5-phosphate = pyridoxine 5'-phosphate + phosphate + 2 H2O + H(+). It participates in cofactor biosynthesis; pyridoxine 5'-phosphate biosynthesis; pyridoxine 5'-phosphate from D-erythrose 4-phosphate: step 5/5. Functionally, catalyzes the complicated ring closure reaction between the two acyclic compounds 1-deoxy-D-xylulose-5-phosphate (DXP) and 3-amino-2-oxopropyl phosphate (1-amino-acetone-3-phosphate or AAP) to form pyridoxine 5'-phosphate (PNP) and inorganic phosphate. In Psychrobacter cryohalolentis (strain ATCC BAA-1226 / DSM 17306 / VKM B-2378 / K5), this protein is Pyridoxine 5'-phosphate synthase.